We begin with the raw amino-acid sequence, 346 residues long: Uroporphyrinogen decarboxylase (346 aa).

Residues 21 to 25 (RQAGR), F40, D71, Y146, S201, and H316 each bind substrate.

Belongs to the uroporphyrinogen decarboxylase family. In terms of assembly, homodimer.

It localises to the cytoplasm. The enzyme catalyses uroporphyrinogen III + 4 H(+) = coproporphyrinogen III + 4 CO2. Its pathway is porphyrin-containing compound metabolism; protoporphyrin-IX biosynthesis; coproporphyrinogen-III from 5-aminolevulinate: step 4/4. Catalyzes the decarboxylation of four acetate groups of uroporphyrinogen-III to yield coproporphyrinogen-III. The polypeptide is Uroporphyrinogen decarboxylase (Rickettsia felis (strain ATCC VR-1525 / URRWXCal2) (Rickettsia azadi)).